The sequence spans 507 residues: Cytochrome P450 monooxygenase helB2 (507 aa).

The first 22 residues, 1 to 22 (MALPIILCLAVILWTSWRLLDA), serve as a signal peptide directing secretion. Residue Cys436 coordinates heme.

Belongs to the cytochrome P450 family. The cofactor is heme.

It participates in mycotoxin biosynthesis. Functionally, cytochrome P450 monooxygenase; part of the gene cluster that mediates the biosynthesis of helvolic acid, an antibacterial nortriterpenoid. Protostadienol synthase helA cyclizes (3S)-oxidosqualene to (17Z)-protosta-17(20),24-dien-3-beta-ol (protostadienol). The synthesis of protostadienol is followed by several steps of monooxygenation, dehydrogenation, and acyl transfer to yield the final helvolic acid. Following the cyclization to the tetracyclic protostadienol by helA, cytochrome P450 monooxygenases helB1-mediated and helB2-mediated oxidation at C-4 and C-16, acyltransferase helD2-dependent acetylation of 16-OH, oxidation of C-21 by cytochrome P450 monooxygenase helB4, and short chain dehydrogenase helC-dependent oxidative decarboxylation yield the fusidane skeleton. This intermediate is further modified in three additional steps mediated by the cytochrome P450 monooxygenase helB3, the acyltransferase helD1, and the 3-ketosteroid 1-dehydrogenase helE to give helvolic acid. Compared with the late stages in the biosynthesis of helvolic acid, enzymes involved in the early stage modifications act in a relatively strict order. The hydroxylation of C-16 by helB1 and subsequent acetylation by helD2 should occur before the helB3-mediated oxidation of C-21. C-4 demethylation in fusidane-type antibiotics proceeds in an unusual manner though it is also achieved by oxidative decarboxylation. The methyl group at C-4 beta position is oxidized by helB1 and subsequently removed by the short chain dehydrogenase helC. The chain is Cytochrome P450 monooxygenase helB2 from Aspergillus fumigatus (strain ATCC MYA-4609 / CBS 101355 / FGSC A1100 / Af293) (Neosartorya fumigata).